We begin with the raw amino-acid sequence, 132 residues long: Ribonuclease VapC (132 aa).

Residues 4–123 (YMLDTNIVIY…SNNLREFERV (120 aa)) enclose the PINc domain. Positions 7 and 98 each coordinate Mg(2+).

Belongs to the PINc/VapC protein family. In terms of assembly, probably forms a complex with cognate antitoxin VapB2. Requires Mg(2+) as cofactor.

In terms of biological role, toxic component of a type II toxin-antitoxin (TA) system. Acts as an RNase. Its toxic effect is neutralized by cognate antitoxin VapB2 but not by non-cognate antitoxin VapB1. The chain is Ribonuclease VapC from Haemophilus influenzae (strain 86-028NP).